Here is a 116-residue protein sequence, read N- to C-terminus: Cell division protein FtsL (116 aa).

The Cytoplasmic segment spans residues 1 to 24; sequence MMLTNRQIRVRLFESLKNSFFKKT. The chain crosses the membrane as a helical span at residues 25-45; it reads VGISFALLFILLITAFSLIVV. Topologically, residues 46–116 are periplasmic; it reads RFEYKLQLNE…NEQKEELNNE (71 aa).

It belongs to the FtsL family. As to quaternary structure, part of a complex composed of FtsB, FtsL and FtsQ.

It localises to the cell inner membrane. In terms of biological role, essential cell division protein. May link together the upstream cell division proteins, which are predominantly cytoplasmic, with the downstream cell division proteins, which are predominantly periplasmic. The chain is Cell division protein FtsL from Francisella tularensis subsp. tularensis (strain SCHU S4 / Schu 4).